The following is a 277-amino-acid chain: Shikimate dehydrogenase (NADP(+)) (277 aa).

Residues 18–20 (SKS) and T65 contribute to the shikimate site. The active-site Proton acceptor is K69. E81 contributes to the NADP(+) binding site. The shikimate site is built by N90 and D106. NADP(+) is bound by residues 130–134 (GAGGA), 154–159 (NRTFSK), and M217. Residue Y219 participates in shikimate binding. G241 provides a ligand contact to NADP(+).

It belongs to the shikimate dehydrogenase family. As to quaternary structure, homodimer.

It carries out the reaction shikimate + NADP(+) = 3-dehydroshikimate + NADPH + H(+). The protein operates within metabolic intermediate biosynthesis; chorismate biosynthesis; chorismate from D-erythrose 4-phosphate and phosphoenolpyruvate: step 4/7. In terms of biological role, involved in the biosynthesis of the chorismate, which leads to the biosynthesis of aromatic amino acids. Catalyzes the reversible NADPH linked reduction of 3-dehydroshikimate (DHSA) to yield shikimate (SA). This chain is Shikimate dehydrogenase (NADP(+)), found in Vibrio campbellii (strain ATCC BAA-1116).